The primary structure comprises 468 residues: Probable Xaa-Pro aminopeptidase pepP (468 aa).

Mn(2+)-binding residues include Asp265, Asp276, Glu399, and Glu439.

This sequence belongs to the peptidase M24B family. Mn(2+) is required as a cofactor.

The enzyme catalyses Release of any N-terminal amino acid, including proline, that is linked to proline, even from a dipeptide or tripeptide.. Functionally, catalyzes the removal of a penultimate prolyl residue from the N-termini of peptides. In Aspergillus fumigatus (strain CBS 144.89 / FGSC A1163 / CEA10) (Neosartorya fumigata), this protein is Probable Xaa-Pro aminopeptidase pepP (pepP).